Reading from the N-terminus, the 284-residue chain is MNWLHAIILGIVEGITEFLPVSSTGHLRIVEKLLGYDIQGAGITAFTAIIQVGAIIAAILYFWSDIVRIVVAWCKGLAHKEDRDDPDYTLGWGIILGSIPVGVVGLVFKDAIETTLSSLWVVAIALILWSGVMWLGDRQLGLNRGMKEIGIVDAIVIGCFQALAPLFPGISRSGATISAGLFRKFDRATATRLSFFMGIPALVAAGIYESVSAASDISIAQGGAVAIGWGPTILATVVSLIVAYVSIAWLLKFVSSNKFTGFMWYRVVVGLIIIGLILSNVVTA.

8 helical membrane passes run 1–21 (MNWLHAIILGIVEGITEFLPV), 43–63 (ITAFTAIIQVGAIIAAILYFW), 88–108 (YTLGWGIILGSIPVGVVGLVF), 116–136 (LSSLWVVAIALILWSGVMWLG), 149–169 (IGIVDAIVIGCFQALAPLFPG), 193–213 (LSFFMGIPALVAAGIYESVSA), 225–245 (VAIGWGPTILATVVSLIVAYV), and 259–279 (FTGFMWYRVVVGLIIIGLILS).

This sequence belongs to the UppP family.

Its subcellular location is the cell membrane. It catalyses the reaction di-trans,octa-cis-undecaprenyl diphosphate + H2O = di-trans,octa-cis-undecaprenyl phosphate + phosphate + H(+). Its function is as follows. Catalyzes the dephosphorylation of undecaprenyl diphosphate (UPP). Confers resistance to bacitracin. The polypeptide is Undecaprenyl-diphosphatase (Cutibacterium acnes (strain DSM 16379 / KPA171202) (Propionibacterium acnes)).